The primary structure comprises 769 residues: Serine protease HtrA-like (769 aa).

Over residues 1–20 (MDIGKKHVIPKSQYRRKRRE) the composition is skewed to basic residues. Positions 1-390 (MDIGKKHVIP…ATSKLNKGRA (390 aa)) are disordered. 2 stretches are compositionally biased toward basic and acidic residues: residues 21–64 (FFHN…ERFK) and 71–108 (LEQRNRDVNENKAEESKSNQDSKSAYNRDHYLTDDVSK). Positions 126 to 137 (YEQNSEATLSTK) are enriched in polar residues. The span at 138–186 (STDKVESTEMRKLSSDKNKVGHEEQHVLSKPSEHDKETRIDSESSRTDS) shows a compositional bias: basic and acidic residues. A compositionally biased stretch (polar residues) spans 247-262 (QQSQNEQTKTYTYGDS). Composition is skewed to basic and acidic residues over residues 264–296 (QNDKSNHENDLSHHIPSISDDKDNVMRENHIVD) and 310–330 (KTDDDRKLDEKIHVEDKHKQN). Over residues 331–347 (ADSSETVGYQSQSTASH) the composition is skewed to polar residues. Over residues 348–364 (RSTEKRNISINDHDKLN) the composition is skewed to basic and acidic residues. Residues 365–390 (GQKTNTKTSANNNQKKATSKLNKGRA) are compositionally biased toward polar residues. The helical transmembrane segment at 410–430 (LVILMGIIILIVILNAIFNNV) threads the bilayer. Residues histidine 504, aspartate 534, and serine 619 each act as charge relay system in the active site. The PDZ domain maps to 680–733 (IASLNSFERQAVKLPGKVKNGVVVDQVDNNGLADQSGLKKGDVITELDGKLLED).

It belongs to the peptidase S1C family.

The protein resides in the cell membrane. In Staphylococcus aureus (strain COL), this protein is Serine protease HtrA-like.